A 938-amino-acid polypeptide reads, in one-letter code: Protein translocase subunit SecA 1 (938 aa).

Residues glutamine 84, 102–106 (GEGKT), and aspartate 491 each bind ATP. Residues 865-938 (QTGGVATKER…QKTGRHAKRR (74 aa)) form a disordered region. A compositionally biased stretch (basic and acidic residues) spans 918-927 (TRKERREAAR).

The protein belongs to the SecA family. Monomer and homodimer. Part of the essential Sec protein translocation apparatus which comprises SecA, SecYEG and auxiliary proteins SecDF. Other proteins may also be involved.

It localises to the cell membrane. The protein resides in the cytoplasm. The enzyme catalyses ATP + H2O + cellular proteinSide 1 = ADP + phosphate + cellular proteinSide 2.. In terms of biological role, part of the Sec protein translocase complex. Interacts with the SecYEG preprotein conducting channel. Has a central role in coupling the hydrolysis of ATP to the transfer of proteins into and across the cell membrane, serving as an ATP-driven molecular motor driving the stepwise translocation of polypeptide chains across the membrane. The chain is Protein translocase subunit SecA 1 from Mycolicibacterium vanbaalenii (strain DSM 7251 / JCM 13017 / BCRC 16820 / KCTC 9966 / NRRL B-24157 / PYR-1) (Mycobacterium vanbaalenii).